The primary structure comprises 382 residues: Mannitol-1-phosphate 5-dehydrogenase (382 aa).

An NAD(+)-binding site is contributed by 3-14 (ALHFGAGNIGRG).

The protein belongs to the mannitol dehydrogenase family.

The enzyme catalyses D-mannitol 1-phosphate + NAD(+) = beta-D-fructose 6-phosphate + NADH + H(+). In Klebsiella pneumoniae, this protein is Mannitol-1-phosphate 5-dehydrogenase (mtlD).